Here is a 129-residue protein sequence, read N- to C-terminus: LEM domain-containing protein 1 (129 aa).

In terms of domain architecture, LEM spans 1 to 45 (MVDVKCLSDYELHKHLMKLGFTPGPILPSTRKTYEKKLVQLLASP). Residues 45 to 129 (PPWKPPVMKR…RAPRTTSHGA (85 aa)) form a disordered region. Residues 83–97 (SLKKTTLDATRDPRA) show a composition bias toward basic and acidic residues.

The polypeptide is LEM domain-containing protein 1 (Lemd1) (Mus musculus (Mouse)).